Consider the following 567-residue polypeptide: uncharacterized protein (567 aa).

The next 12 helical transmembrane spans lie at 136–156 (LFCLGCLWCYFSSGMVSLIFA), 159–179 (FMGIGGGGLITLSTIINSDII), 193–213 (LLLGFGAICGASFGGVLSEVF), 217–237 (LCFLVQVPFSVLSIAVGFFFV), 258–278 (ILGGLLLVSGLTSLLLVLTFG), 291–311 (LLLLLGILCIVAFVYVESITE), 334–354 (FLIGLAGYAYLFTLPLFFQLV), 364–384 (LRLALPSLSTPIGGLICGILM), 393–415 (LLFSGVFLMSLGYFLSLFIHPGI), 426–446 (PANVGQGIGFPSSLFSFIFAF), 457–477 (TLYLIRSIGSLFGVGGLSAVI), and 536–553 (AQQFTTICCVLALGLCIL).

Belongs to the major facilitator superfamily.

Its subcellular location is the membrane. This is an uncharacterized protein from Schizosaccharomyces pombe (strain 972 / ATCC 24843) (Fission yeast).